Consider the following 309-residue polypeptide: 2-dehydro-3-deoxygluconokinase (309 aa).

Substrate-binding positions include 34–38 (GAEVN), Tyr89, 103–105 (YYR), and Arg167. Residues 165 to 167 (NYR), Ser193, 219 to 225 (KRGAKGA), 248 to 251 (GAGD), and Asn275 contribute to the ATP site. Asp251 serves as a coordination point for substrate. The active-site Proton acceptor is Asp251. Asp287 contributes to the substrate binding site.

The protein belongs to the carbohydrate kinase pfkB family. Homohexamer; trimer of dimers.

The catalysed reaction is 2-dehydro-3-deoxy-D-gluconate + ATP = 2-dehydro-3-deoxy-6-phospho-D-gluconate + ADP + H(+). It functions in the pathway carbohydrate acid metabolism; 2-dehydro-3-deoxy-D-gluconate degradation; D-glyceraldehyde 3-phosphate and pyruvate from 2-dehydro-3-deoxy-D-gluconate: step 1/2. Its function is as follows. Involved in the degradation of glucose via the semi-phosphorylative Entner-Doudoroff pathway. Catalyzes the phosphorylation of 2-keto-3-deoxygluconate (KDG) to produce 2-keto-3-deoxy-6-phosphogluconate (KDPG). In Thermus thermophilus (strain ATCC 27634 / DSM 579 / HB8), this protein is 2-dehydro-3-deoxygluconokinase (kdgK).